We begin with the raw amino-acid sequence, 208 residues long: Large ribosomal subunit protein uL3 (208 aa).

The segment at 123-147 (RHGQSRGPMAHGSRYHRRPGSMGPV) is disordered.

This sequence belongs to the universal ribosomal protein uL3 family. Part of the 50S ribosomal subunit. Forms a cluster with proteins L14 and L19.

In terms of biological role, one of the primary rRNA binding proteins, it binds directly near the 3'-end of the 23S rRNA, where it nucleates assembly of the 50S subunit. The polypeptide is Large ribosomal subunit protein uL3 (Streptococcus sanguinis (strain SK36)).